Here is a 294-residue protein sequence, read N- to C-terminus: 33 kDa chaperonin (294 aa).

2 disulfide bridges follow: Cys239/Cys241 and Cys272/Cys275.

It belongs to the HSP33 family. In terms of processing, under oxidizing conditions two disulfide bonds are formed involving the reactive cysteines. Under reducing conditions zinc is bound to the reactive cysteines and the protein is inactive.

It is found in the cytoplasm. In terms of biological role, redox regulated molecular chaperone. Protects both thermally unfolding and oxidatively damaged proteins from irreversible aggregation. Plays an important role in the bacterial defense system toward oxidative stress. The protein is 33 kDa chaperonin of Listeria monocytogenes serotype 4b (strain CLIP80459).